Here is a 164-residue protein sequence, read N- to C-terminus: Large ribosomal subunit protein uL10 (164 aa).

Belongs to the universal ribosomal protein uL10 family. Part of the ribosomal stalk of the 50S ribosomal subunit. The N-terminus interacts with L11 and the large rRNA to form the base of the stalk. The C-terminus forms an elongated spine to which L12 dimers bind in a sequential fashion forming a multimeric L10(L12)X complex.

In terms of biological role, forms part of the ribosomal stalk, playing a central role in the interaction of the ribosome with GTP-bound translation factors. In Helicobacter pylori (strain G27), this protein is Large ribosomal subunit protein uL10.